Consider the following 456-residue polypeptide: Myricetin 3-O-rhamnosyltransferase UGT77B2 (456 aa).

The active-site Proton acceptor is the H19. An an anthocyanidin-binding site is contributed by H19. The active-site Charge relay is the D116. H147 is a binding site for an anthocyanidin. Residues T279, A334, H351, N355, and E359 each contribute to the UDP-beta-L-rhamnose site. A374 provides a ligand contact to an anthocyanidin.

This sequence belongs to the UDP-glycosyltransferase family. As to expression, expressed in young cromes.

The catalysed reaction is myricetin + UDP-beta-L-rhamnose = myricetin 3-O-alpha-L-rhamnoside + UDP + H(+). It participates in flavonoid metabolism. Functionally, rhamnosyltransferase involved in montbretin A (MbA) biosynthesis. Catalyzes the 3-O rhamnosylation of myricetin to produce myricetin 3-O-alpha-L-rhamnoside (MR), a precursor of MbA. MbA is a potent inhibitor of human pancreatic alpha-amylase and is being developed as drug candidate to treat type-2 diabetes. In vitro, is able to transfer UDP-glucose and UDP-xylose with 50-fold less efficiency compared with UDP-rhamnose. In vitro, can use kaempferol or quercetin as substrates, although these two flavonols may not be physiological substrates in vivo. The sequence is that of Myricetin 3-O-rhamnosyltransferase UGT77B2 from Crocosmia x crocosmiiflora (Montbretia).